Here is a 229-residue protein sequence, read N- to C-terminus: MSADPRLILPLDLSSVSEARAMVETLGDAVSFYKIGLELLATDGMALARQLKGEGKQIFLDWKLHDIGATVERSARVLAGAGCDLLTVHAEPQVMAAAVKAKGGSDLKILAVTVLTSLTDADLIELGYAFSARDLVARRIRQAIEAGVDGVVSSPQEAALAREIAGPDFLVVTPGVRPFWSAKNDQARAATPADALKAGASHLVCGRPITAANDPREAALKVVGEMAGL.

Substrate is bound by residues D12, K34, 61–70 (DWKLHDIGAT), T116, R177, Q186, G206, and R207. K63 functions as the Proton donor in the catalytic mechanism.

This sequence belongs to the OMP decarboxylase family. Type 1 subfamily. In terms of assembly, homodimer.

It catalyses the reaction orotidine 5'-phosphate + H(+) = UMP + CO2. It functions in the pathway pyrimidine metabolism; UMP biosynthesis via de novo pathway; UMP from orotate: step 2/2. Catalyzes the decarboxylation of orotidine 5'-monophosphate (OMP) to uridine 5'-monophosphate (UMP). This is Orotidine 5'-phosphate decarboxylase from Caulobacter sp. (strain K31).